The chain runs to 82 residues: Small ribosomal subunit protein uS17 (82 aa).

This sequence belongs to the universal ribosomal protein uS17 family. As to quaternary structure, part of the 30S ribosomal subunit.

One of the primary rRNA binding proteins, it binds specifically to the 5'-end of 16S ribosomal RNA. The sequence is that of Small ribosomal subunit protein uS17 from Shewanella woodyi (strain ATCC 51908 / MS32).